A 576-amino-acid chain; its full sequence is Proline--tRNA ligase (576 aa).

Belongs to the class-II aminoacyl-tRNA synthetase family. ProS type 1 subfamily. Homodimer.

It is found in the cytoplasm. The catalysed reaction is tRNA(Pro) + L-proline + ATP = L-prolyl-tRNA(Pro) + AMP + diphosphate. In terms of biological role, catalyzes the attachment of proline to tRNA(Pro) in a two-step reaction: proline is first activated by ATP to form Pro-AMP and then transferred to the acceptor end of tRNA(Pro). As ProRS can inadvertently accommodate and process non-cognate amino acids such as alanine and cysteine, to avoid such errors it has two additional distinct editing activities against alanine. One activity is designated as 'pretransfer' editing and involves the tRNA(Pro)-independent hydrolysis of activated Ala-AMP. The other activity is designated 'posttransfer' editing and involves deacylation of mischarged Ala-tRNA(Pro). The misacylated Cys-tRNA(Pro) is not edited by ProRS. The sequence is that of Proline--tRNA ligase from Trichlorobacter lovleyi (strain ATCC BAA-1151 / DSM 17278 / SZ) (Geobacter lovleyi).